Here is a 1321-residue protein sequence, read N- to C-terminus: Probable serine/threonine-protein kinase fnkE (1321 aa).

FNIP repeat units lie at residues Y108–S149, Y150–S191, Y192–S233, and Y255–S296. The Protein kinase 1 domain maps to S295 to M595. ATP is bound by residues L301 to N309 and K325. D465 acts as the Proton acceptor in catalysis. 2 FNIP repeats span residues F654–F696 and F741–N783. Residues W860–L1128 enclose the Protein kinase 2 domain. Residues L866–V874 and K895 each bind ATP. D990 functions as the Proton acceptor in the catalytic mechanism. 2 FNIP repeats span residues Y1160 to E1202 and F1224 to N1268.

The protein belongs to the protein kinase superfamily. STE Ser/Thr protein kinase family. It depends on Mg(2+) as a cofactor.

The catalysed reaction is L-seryl-[protein] + ATP = O-phospho-L-seryl-[protein] + ADP + H(+). It carries out the reaction L-threonyl-[protein] + ATP = O-phospho-L-threonyl-[protein] + ADP + H(+). This chain is Probable serine/threonine-protein kinase fnkE, found in Dictyostelium discoideum (Social amoeba).